A 245-amino-acid polypeptide reads, in one-letter code: Endonuclease III (245 aa).

The HhH domain maps to Met119 to Gly138. Positions 198, 205, 208, and 214 each coordinate [4Fe-4S] cluster.

It belongs to the Nth/MutY family. It depends on [4Fe-4S] cluster as a cofactor.

It carries out the reaction 2'-deoxyribonucleotide-(2'-deoxyribose 5'-phosphate)-2'-deoxyribonucleotide-DNA = a 3'-end 2'-deoxyribonucleotide-(2,3-dehydro-2,3-deoxyribose 5'-phosphate)-DNA + a 5'-end 5'-phospho-2'-deoxyribonucleoside-DNA + H(+). Its function is as follows. DNA repair enzyme that has both DNA N-glycosylase activity and AP-lyase activity. The DNA N-glycosylase activity releases various damaged pyrimidines from DNA by cleaving the N-glycosidic bond, leaving an AP (apurinic/apyrimidinic) site. The AP-lyase activity cleaves the phosphodiester bond 3' to the AP site by a beta-elimination, leaving a 3'-terminal unsaturated sugar and a product with a terminal 5'-phosphate. This Mycobacterium leprae (strain TN) protein is Endonuclease III.